We begin with the raw amino-acid sequence, 388 residues long: FBD-associated F-box protein At5g60610 (388 aa).

The F-box domain occupies 1 to 47 (MDRISGLPDELLVKIISFVPTKVAVSTSILSKRWESLWKWVPKLECD). Residues 337 to 388 (NWKNIQRSVPKCLKSSLKTLEFAGYTARPEERDFLSFIFKKARCLKTSSISH) enclose the FBD domain.

The polypeptide is FBD-associated F-box protein At5g60610 (Arabidopsis thaliana (Mouse-ear cress)).